The following is a 484-amino-acid chain: MGIFDVISGLFKKKPKIAYAKSQSVDLIELKRNPYYIVASVELGNTTTKSIITATNMDTGKTYIVSKHVKMTRDVRKPKKGEEVFGETLWGVELTREAVADMVKEVLLESLKKAGLTVDDLHFVVRSTGVTAGFASPEEVGEMIIALAQGCMKAGVPPAKMTPAMTKEQIPKPFDKYSFLDKIIFDGAVTGVLPPTGKEVVANEMEGELVTAGIKVGSKWTDVDFRNPCMSIDFGTTLAGRITNDTLPYAKVIGNLCGLAGAIADAIARGSGKIDEKTGAALDLANIKGKPNEELAKEYAEEMHKYIIIKEVPKDVDRFGTVPVDPKSAEKAGTTLIGCDVGKNGSDLIKLEELGRELVEKSDIPTLMCCLDYVMSEVVRRLVELAYKKGLISEKSAVGITGRAGITGRKPELIIEKLKTLEIWDKVEENVVFVEDGLALGASVMARCMNCLGTPQVPIGGVRGGGCILGLRRKWQKERGMIRD.

The protein to M.thermoautotrophicum MTH1153.

This is an uncharacterized protein from Methanocaldococcus jannaschii (strain ATCC 43067 / DSM 2661 / JAL-1 / JCM 10045 / NBRC 100440) (Methanococcus jannaschii).